We begin with the raw amino-acid sequence, 398 residues long: Cell adhesion molecule 3 (398 aa).

The N-terminal stretch at 1 to 24 (MGAPAASLLLLLLLFACCWAPGGA) is a signal peptide. The Ig-like V-type domain occupies 25-126 (NLSQDDSQPW…VRTAKSLVTV (102 aa)). Topologically, residues 25-330 (NLSQDDSQPW…PVPSSSSTYH (306 aa)) are extracellular. Cystine bridges form between C50–C110, C152–C209, and C254–C299. 2 consecutive Ig-like C2-type domains span residues 130-228 (PQKP…QRIE) and 233-315 (PTAM…YTLN). An N-linked (GlcNAc...) asparagine glycan is attached at N290. The helical transmembrane segment at 331 to 351 (AIIGGIVAFIVFLLLIMLIFL) threads the bilayer. Topologically, residues 352-398 (GHYLIRHKGTYLTHEAKGSDDAPDADTAIINAEGGQSGGDDKKEYFI) are cytoplasmic. The disordered stretch occupies residues 367 to 398 (AKGSDDAPDADTAIINAEGGQSGGDDKKEYFI). S388 bears the Phosphoserine mark.

This sequence belongs to the nectin family. In terms of assembly, homodimer. Can form trans-heterodimers with NECTIN3. Interacts with EPB41L1, DLG3, PALS2 and CASK. As to expression, isoform 1 is expressed mainly in adult and fetal brain. Isoform 2 is highly expressed in adult brain and weakly expressed in placenta. In brain, Isoform 2 is highly expressed in cerebellum.

It localises to the cell membrane. The protein resides in the cell junction. Functionally, involved in cell-cell adhesion. Has both calcium-independent homophilic cell-cell adhesion activity and calcium-independent heterophilic cell-cell adhesion activity with IGSF4, NECTIN1 and NECTIN3. Interaction with EPB41L1 may regulate structure or function of cell-cell junctions. The polypeptide is Cell adhesion molecule 3 (CADM3) (Homo sapiens (Human)).